We begin with the raw amino-acid sequence, 145 residues long: Basic phospholipase A2 BFPA (145 aa).

The first 27 residues, Met-1–Leu-27, serve as a signal peptide directing secretion. 7 disulfides stabilise this stretch: Cys-38/Cys-97, Cys-52/Cys-144, Cys-54/Cys-70, Cys-69/Cys-125, Cys-76/Cys-118, Cys-86/Cys-111, and Cys-104/Cys-116. 3 residues coordinate Ca(2+): Tyr-53, Gly-55, and Gly-57. His-73 is a catalytic residue. Ca(2+) is bound at residue Asp-74. Residue Asp-119 is part of the active site.

It belongs to the phospholipase A2 family. Group I subfamily. D49 sub-subfamily. As to quaternary structure, homodimer; disulfide-linked. Ca(2+) serves as cofactor. As to expression, expressed by the venom gland.

It localises to the secreted. The enzyme catalyses a 1,2-diacyl-sn-glycero-3-phosphocholine + H2O = a 1-acyl-sn-glycero-3-phosphocholine + a fatty acid + H(+). Its function is as follows. Snake venom phospholipase A2 (PLA2) that inhibits blood coagulation and shows bactericidal activities against both Gram-negative and -positive bacteria (E.coli, MIC=0.4 uM and S.aureus, MIC=0.1 uM). PLA2 catalyzes the calcium-dependent hydrolysis of the 2-acyl groups in 3-sn-phosphoglycerides. The chain is Basic phospholipase A2 BFPA from Bungarus fasciatus (Banded krait).